The following is a 280-amino-acid chain: DegV domain-containing protein TTE1491 (280 aa).

One can recognise a DegV domain in the interval 4 to 279; that stretch reads IAIVTDSLSD…PDAAGVFFEE (276 aa). Hexadecanoate-binding residues include Thr-61 and Ser-93.

May bind long-chain fatty acids, such as palmitate, and may play a role in lipid transport or fatty acid metabolism. This is DegV domain-containing protein TTE1491 from Caldanaerobacter subterraneus subsp. tengcongensis (strain DSM 15242 / JCM 11007 / NBRC 100824 / MB4) (Thermoanaerobacter tengcongensis).